We begin with the raw amino-acid sequence, 637 residues long: Cell division cycle-related protein res1/sct1 (637 aa).

In terms of domain architecture, HTH APSES-type spans 6–112 (IHKITYSGVE…YSGSAFMPMS (107 aa)). A DNA-binding region (H-T-H motif) is located at residues 37-58 (ATQILKIAELDKPRRTRILEKF). Residues 114 to 137 (FTPQSNRKPTEAYRRNSPVKKSFS) form a disordered region. ANK repeat units follow at residues 236 to 265 (DGHT…NVVA) and 357 to 386 (HGDT…SSSI).

DSC1 contains cdc10 and sct1/res1.

Acts as a positive regulator of the mitotic cell cycle and as a negative regulator of sexual differentiation. May be involved in the transcriptional regulation of the cdc22 and cdt1 genes. Is an integral component of the DSC1-like complex. This is Cell division cycle-related protein res1/sct1 (res1) from Schizosaccharomyces pombe (strain 972 / ATCC 24843) (Fission yeast).